An 857-amino-acid polypeptide reads, in one-letter code: Bifunctional uridylyltransferase/uridylyl-removing enzyme (857 aa).

The uridylyltransferase stretch occupies residues 1–322 (MDTTPELLLC…FPSESMVTRE (322 aa)). Residues 323-679 (INDRFVERQG…ARISPAGEGL (357 aa)) are uridylyl-removing. Residues 441-563 (VDQHILMVVR…VGNGRYLTAL (123 aa)) enclose the HD domain. ACT domains follow at residues 680–760 (QVAV…DPTQ) and 788–857 (LLSV…ALAI).

Belongs to the GlnD family. Requires Mg(2+) as cofactor.

It carries out the reaction [protein-PII]-L-tyrosine + UTP = [protein-PII]-uridylyl-L-tyrosine + diphosphate. The enzyme catalyses [protein-PII]-uridylyl-L-tyrosine + H2O = [protein-PII]-L-tyrosine + UMP + H(+). With respect to regulation, uridylyltransferase (UTase) activity is inhibited by glutamine, while glutamine activates uridylyl-removing (UR) activity. Its function is as follows. Modifies, by uridylylation and deuridylylation, the PII regulatory proteins (GlnB and homologs), in response to the nitrogen status of the cell that GlnD senses through the glutamine level. Under low glutamine levels, catalyzes the conversion of the PII proteins and UTP to PII-UMP and PPi, while under higher glutamine levels, GlnD hydrolyzes PII-UMP to PII and UMP (deuridylylation). Thus, controls uridylylation state and activity of the PII proteins, and plays an important role in the regulation of nitrogen assimilation and metabolism. This is Bifunctional uridylyltransferase/uridylyl-removing enzyme from Cupriavidus metallidurans (strain ATCC 43123 / DSM 2839 / NBRC 102507 / CH34) (Ralstonia metallidurans).